The chain runs to 21 residues: 20 kDa chaperonin, chloroplastic (21 aa).

The protein belongs to the GroES chaperonin family. In terms of assembly, forms stable complexes with CPN60 in the presence of ATP.

It is found in the plastid. The protein localises to the chloroplast. Seems to function only as a co-chaperone, along with cpn60, and in certain cases is essential for the discharge of biologically active proteins from cpn60. The polypeptide is 20 kDa chaperonin, chloroplastic (CPN21) (Pisum sativum (Garden pea)).